A 287-amino-acid chain; its full sequence is Taxis protein CheF2 (287 aa).

In terms of assembly, interacts with chemotaxis (Che) proteins as well as flagella accessory (Fla) proteins.

Involved in taxis signal transduction. The sequence is that of Taxis protein CheF2 (cheF2) from Halobacterium salinarum (strain ATCC 29341 / DSM 671 / R1).